The chain runs to 225 residues: PKHD-type hydroxylase YbiX (225 aa).

The Fe2OG dioxygenase domain maps to 78 to 177 (TLSTPLFNRY…RVASFMWIQS (100 aa)). Histidine 96, aspartate 98, and histidine 158 together coordinate Fe cation. Arginine 168 serves as a coordination point for 2-oxoglutarate.

Fe(2+) serves as cofactor. It depends on L-ascorbate as a cofactor.

The protein is PKHD-type hydroxylase YbiX of Escherichia coli O6:H1 (strain CFT073 / ATCC 700928 / UPEC).